The chain runs to 156 residues: Cell division protein SepF (156 aa).

Belongs to the SepF family. In terms of assembly, homodimer. Interacts with FtsZ.

It is found in the cytoplasm. Functionally, cell division protein that is part of the divisome complex and is recruited early to the Z-ring. Probably stimulates Z-ring formation, perhaps through the cross-linking of FtsZ protofilaments. Its function overlaps with FtsA. The protein is Cell division protein SepF of Bacillus cytotoxicus (strain DSM 22905 / CIP 110041 / 391-98 / NVH 391-98).